The following is a 240-amino-acid chain: Aquaporin Z (240 aa).

2 consecutive transmembrane segments (helical) span residues 10-30 and 35-55; these read MIGTFWLTFAGCGSAVIAAGF and IGLVGVSLAFGLSVVTMAYAI. Positions 64–66 match the NPA 1 motif; sequence NPA. Helical transmembrane passes span 90–110, 131–151, and 160–180; these read VLGAIAAAALLYLIASGAAGF, LVACFVMEVVMTMMFLFVIMG, and GFAPLAIGLALVMIHLVSIPV. The NPA 2 signature appears at 186–188; it reads NPA. The helical transmembrane segment at 202 to 222 threads the bilayer; the sequence is IGQLWLFWVAPLLGGVLGGVI.

This sequence belongs to the MIP/aquaporin (TC 1.A.8) family. Homotetramer.

It is found in the cell inner membrane. The catalysed reaction is H2O(in) = H2O(out). Channel that permits osmotically driven movement of water in both directions. It is involved in the osmoregulation and in the maintenance of cell turgor during volume expansion in rapidly growing cells. It mediates rapid entry or exit of water in response to abrupt changes in osmolarity. The sequence is that of Aquaporin Z from Rhodopseudomonas palustris (strain ATCC BAA-98 / CGA009).